The primary structure comprises 226 residues: PDGF-related-transforming protein sis (226 aa).

The span at 201–215 (RRPPKGKHRKCKHTH) shows a compositional bias: basic residues. A disordered region spans residues 201–226 (RRPPKGKHRKCKHTHDKTALKETLGA).

Belongs to the PDGF/VEGF growth factor family.

The chain is PDGF-related-transforming protein sis (V-SIS) from Woolly monkey sarcoma virus (WMSV).